A 349-amino-acid chain; its full sequence is Anthranilate phosphoribosyltransferase (349 aa).

Residues glycine 81, 84–85 (GD), threonine 89, 91–94 (NVST), 109–117 (KHGNRAASS), and alanine 121 contribute to the 5-phospho-alpha-D-ribose 1-diphosphate site. Glycine 81 lines the anthranilate pocket. Serine 93 contacts Mg(2+). Asparagine 112 serves as a coordination point for anthranilate. Arginine 167 contributes to the anthranilate binding site. Positions 226 and 227 each coordinate Mg(2+).

The protein belongs to the anthranilate phosphoribosyltransferase family. As to quaternary structure, homodimer. The cofactor is Mg(2+).

It catalyses the reaction N-(5-phospho-beta-D-ribosyl)anthranilate + diphosphate = 5-phospho-alpha-D-ribose 1-diphosphate + anthranilate. It functions in the pathway amino-acid biosynthesis; L-tryptophan biosynthesis; L-tryptophan from chorismate: step 2/5. In terms of biological role, catalyzes the transfer of the phosphoribosyl group of 5-phosphorylribose-1-pyrophosphate (PRPP) to anthranilate to yield N-(5'-phosphoribosyl)-anthranilate (PRA). This is Anthranilate phosphoribosyltransferase from Methylocella silvestris (strain DSM 15510 / CIP 108128 / LMG 27833 / NCIMB 13906 / BL2).